We begin with the raw amino-acid sequence, 560 residues long: Cytosolic purine 5'-nucleotidase (560 aa).

Catalysis depends on aspartate 52, which acts as the Nucleophile. Aspartate 52 and aspartate 54 together coordinate IMP. Aspartate 52 and aspartate 54 together coordinate Mg(2+). Aspartate 54 serves as the catalytic Proton donor. Residues arginine 144 and asparagine 154 each contribute to the ATP site. Residues arginine 202, aspartate 206, lysine 215, threonine 249, asparagine 250, serine 251, and lysine 292 each coordinate IMP. A Mg(2+)-binding site is contributed by aspartate 351. A Phosphoserine modification is found at serine 418. The ATP site is built by glutamine 453 and arginine 456. Residues serine 502, serine 511, and serine 527 each carry the phosphoserine modification. Residues 541-560 (PQEITHCHDEDDDEEEEEEE) form a disordered region. Positions 548-560 (HDEDDDEEEEEEE) are required for tetramer assembly. The segment covering 550 to 560 (EDDDEEEEEEE) has biased composition (acidic residues).

It belongs to the 5'(3')-deoxyribonucleotidase family. In terms of assembly, homotetramer. Mg(2+) is required as a cofactor.

It is found in the cytoplasm. Its subcellular location is the cytosol. The enzyme catalyses a ribonucleoside 5'-phosphate + H2O = a ribonucleoside + phosphate. It catalyses the reaction a 2'-deoxyribonucleoside + a ribonucleoside 5'-phosphate = a ribonucleoside + a 2'-deoxyribonucleoside 5'-phosphate. The catalysed reaction is IMP + H2O = inosine + phosphate. It carries out the reaction GMP + H2O = guanosine + phosphate. The enzyme catalyses dGMP + H2O = 2'-deoxyguanosine + phosphate. It catalyses the reaction dIMP + H2O = 2'-deoxyinosine + phosphate. The catalysed reaction is XMP + H2O = xanthosine + phosphate. It carries out the reaction inosine + GMP = guanosine + IMP. The enzyme catalyses dGMP + inosine = 2'-deoxyguanosine + IMP. It catalyses the reaction dIMP + inosine = 2'-deoxyinosine + IMP. The catalysed reaction is inosine + UMP = uridine + IMP. It carries out the reaction inosine + CMP = cytidine + IMP. The enzyme catalyses inosine + AMP = IMP + adenosine. With respect to regulation, allosterically activated by various compounds including ATP, 2,3-BPG/2,3-Bisphosphoglyceric acid and Ap4A/P1,P4-bis(5'-adenosyl) tetraphosphate. Binding of an allosteric activator is a prerequisiste to magnesium and substrate binding. Inhibited by inorganic phosphate. Functionally, broad specificity cytosolic 5'-nucleotidase that catalyzes the dephosphorylation of 6-hydroxypurine nucleoside 5'-monophosphates. In addition, possesses a phosphotransferase activity by which it can transfer a phosphate from a donor nucleoside monophosphate to an acceptor nucleoside, preferably inosine, deoxyinosine and guanosine. Has the highest activities for IMP and GMP followed by dIMP, dGMP and XMP. Could also catalyze the transfer of phosphates from pyrimidine monophosphates but with lower efficiency. Through these activities regulates the purine nucleoside/nucleotide pools within the cell. This Mus musculus (Mouse) protein is Cytosolic purine 5'-nucleotidase.